The primary structure comprises 525 residues: Transmembrane protein 184C (525 aa).

Transmembrane regions (helical) follow at residues 17–37 (LLVLFYATTILVAVPICIWKF), 48–68 (SWFIAGIFLLLTIPVSLWGIL), 83–103 (IIRILWMVPIYSVDSWVALVY), 121–141 (VIYNFMIFLTNYLTIRFPNLI), 212–232 (YLVILNNLSQLFAMYCLLLFY), 254–274 (VVFVSFWQAVLIALLVKLGVI), and 287–307 (AVATGLQDFIICIEMFFAAIA). Disordered stretches follow at residues 358-394 (PKKKCFPGDPDHNEHSSLLSSSSQDLTSGSSKVPSPG) and 483-525 (LFPS…STDP). The span at 373 to 388 (SSLLSSSSQDLTSGSS) shows a compositional bias: low complexity. Residues 483–502 (LFPSTETSENSMIDTSESQQ) are compositionally biased toward polar residues. Residues 503–525 (ESSDLCTESSDSSTESSDLSTDP) are compositionally biased toward low complexity.

The protein belongs to the TMEM184 family.

It localises to the membrane. Functionally, possible tumor suppressor which may play a role in cell growth. The chain is Transmembrane protein 184C (Tmem184c) from Mus musculus (Mouse).